We begin with the raw amino-acid sequence, 174 residues long: ATP synthase subunit b (174 aa).

Residues 15–33 (NPGLVIWTLVTFSVVVFVL) form a helical membrane-spanning segment.

The protein belongs to the ATPase B chain family. In terms of assembly, F-type ATPases have 2 components, F(1) - the catalytic core - and F(0) - the membrane proton channel. F(1) has five subunits: alpha(3), beta(3), gamma(1), delta(1), epsilon(1). F(0) has three main subunits: a(1), b(2) and c(10-14). The alpha and beta chains form an alternating ring which encloses part of the gamma chain. F(1) is attached to F(0) by a central stalk formed by the gamma and epsilon chains, while a peripheral stalk is formed by the delta and b chains.

The protein resides in the cell inner membrane. F(1)F(0) ATP synthase produces ATP from ADP in the presence of a proton or sodium gradient. F-type ATPases consist of two structural domains, F(1) containing the extramembraneous catalytic core and F(0) containing the membrane proton channel, linked together by a central stalk and a peripheral stalk. During catalysis, ATP synthesis in the catalytic domain of F(1) is coupled via a rotary mechanism of the central stalk subunits to proton translocation. In terms of biological role, component of the F(0) channel, it forms part of the peripheral stalk, linking F(1) to F(0). The chain is ATP synthase subunit b from Leptospira biflexa serovar Patoc (strain Patoc 1 / Ames).